Consider the following 528-residue polypeptide: Probable rhamnogalacturonate lyase A (528 aa).

Residues 1–20 (MLSRTILFSTSFLWVRVANA) form the signal peptide. 2 disulfides stabilise this stretch: cysteine 50-cysteine 93 and cysteine 184-cysteine 193.

The protein belongs to the polysaccharide lyase 4 family.

It localises to the secreted. The enzyme catalyses Endotype eliminative cleavage of L-alpha-rhamnopyranosyl-(1-&gt;4)-alpha-D-galactopyranosyluronic acid bonds of rhamnogalacturonan I domains in ramified hairy regions of pectin leaving L-rhamnopyranose at the reducing end and 4-deoxy-4,5-unsaturated D-galactopyranosyluronic acid at the non-reducing end.. Its function is as follows. Pectinolytic enzymes consist of four classes of enzymes: pectin lyase, polygalacturonase, pectin methylesterase and rhamnogalacturonase. Degrades the rhamnogalacturonan I (RG-I) backbone of pectin. The chain is Probable rhamnogalacturonate lyase A (rglA) from Aspergillus flavus (strain ATCC 200026 / FGSC A1120 / IAM 13836 / NRRL 3357 / JCM 12722 / SRRC 167).